Here is a 307-residue protein sequence, read N- to C-terminus: Voltage-dependent anion channel-forming protein alr2987 (307 aa).

The next 4 membrane-spanning stretches (helical) occupy residues 19 to 39 (VIGAIYKRVICCALFGVLVTL), 47 to 67 (VSQPILGSVIPSIVLGLLLVF), 209 to 229 (PLAYSIHLKQLLLLYCFLLPF), and 238 to 258 (WTGLVVGLVSFTLFGIEAIGL).

The protein belongs to the anion channel-forming bestrophin (TC 1.A.46) family.

The protein localises to the cell membrane. This chain is Voltage-dependent anion channel-forming protein alr2987, found in Nostoc sp. (strain PCC 7120 / SAG 25.82 / UTEX 2576).